The primary structure comprises 604 residues: Beta-alanine transporter (604 aa).

The Cytoplasmic portion of the chain corresponds to 1–23 (MDFDEVLREVGSFGLYQKVIICS). Residues 24-44 (VLLPAALPCAFHAYSQLFIAA) form a helical membrane-spanning segment. Residues 45–151 (TPQHFCRVPE…QEWNLVCDRS (107 aa)) are Extracellular-facing. Residues N68 and N88 are each glycosylated (N-linked (GlcNAc...) asparagine). A helical membrane pass occupies residues 152-172 (FLVTLALVVFGVGGLLGNYVF). Topologically, residues 173-182 (GYLVDLWGRR) are cytoplasmic. The helical transmembrane segment at 183–203 (PSFYAYLLLEIIACAASAFAW) threads the bilayer. Topologically, residues 204–212 (NYYTWLGLR) are extracellular. The helical transmembrane segment at 213-233 (FVVGLTVPAILASPYVLAIEL) threads the bilayer. Topologically, residues 234–243 (VGPERRVFCT) are cytoplasmic. A helical membrane pass occupies residues 244–264 (IVSNIAYSLGLVVLAGVIYIV). The Extracellular portion of the chain corresponds to 265–268 (RDWR). A helical transmembrane segment spans residues 269 to 289 (ELSLAVSMPLLMLFSCFFVLP). Residues 290 to 362 (ESPRWLMAVG…FRGPNMRRKT (73 aa)) are Cytoplasmic-facing. The chain crosses the membrane as a helical span at residues 363–383 (LIITLIWFANTSVYVGLSYYA). At 384 to 390 (PALGGDE) the chain is on the extracellular side. The chain crosses the membrane as a helical span at residues 391 to 411 (IWNFFLAGAVELPTYLLLWPG). The Cytoplasmic segment spans residues 412 to 418 (LSYFGRR). The helical transmembrane segment at 419 to 439 (WILFISMLVGGVACVATFLYP) threads the bilayer. Residues 440–442 (DIT) are Extracellular-facing. A helical transmembrane segment spans residues 443–463 (LLLYCVGKMGISSSFVVLPLM). Residues 464–473 (ASELYPTVVR) are Cytoplasmic-facing. A helical membrane pass occupies residues 474–494 (GLGMSFSSVISMVGPIVIPMI). Residues 495 to 501 (NHMGQQM) are Extracellular-facing. The chain crosses the membrane as a helical span at residues 502–522 (LVLPLIVMGALLILGGFASLL). The Cytoplasmic segment spans residues 523–604 (LPETRNRNLP…SICKNEMRTL (82 aa)).

It belongs to the major facilitator (TC 2.A.1) superfamily. Organic cation transporter (TC 2.A.1.19) family. In terms of tissue distribution, expressed in the head and predominantly in the retinal pigment cells of the compound eye.

The protein localises to the cell membrane. Functionally, beta-alanine transporter required for the uptake of beta-alanine by the glia. Required for the recycling process of the neurotransmitter histamine in photoreceptor neurons of the compound eye and therefore for photoreceptor synaptic transmission. Following histamine release from photoreceptors and its uptake by glia, histamine is conjugated to beta-alanine by e/Ebony to form the inactive metabolite, carcinine. The sequence is that of Beta-alanine transporter from Drosophila melanogaster (Fruit fly).